Consider the following 368-residue polypeptide: MLWKGFQKPKRLAFDSESLTDKYGHFWAQPFERGFGTTIGNALRRVLLSSIEGAAITAVKIEGVLHEFQSIPGVVEDATDIILNLKQIPFRLNGDAPKAIYLRAEQPGIVTSGMIETDADVEILDKDVYIATISEGGKLDMEMRLKKGRGYVSADKNFDEDLGLGFIPIDSVHSPVRKCNYSVEAARLGQITDYDKLSIELWTNGSVNPADALGLAAKLLKDHMNIFINFEEEIEASHAEDRKPEIRNENLNRSVEELELSVRSYNCLKNANIQTIGELVQKTEAEMLKTKNFGRKSLNEIKEILASMGLSLGMKIDEHGNAVAPPPGSQPAPSYGGYPGSYGTGGTFGGGGNYGGGGGFGGDNNPGF.

The tract at residues 1–231 (MLWKGFQKPK…DHMNIFINFE (231 aa)) is alpha N-terminal domain (alpha-NTD). Residues 243–368 (KPEIRNENLN…GFGGDNNPGF (126 aa)) form an alpha C-terminal domain (alpha-CTD) region.

The protein belongs to the RNA polymerase alpha chain family. In terms of assembly, homodimer. The RNAP catalytic core consists of 2 alpha, 1 beta, 1 beta' and 1 omega subunit. When a sigma factor is associated with the core the holoenzyme is formed, which can initiate transcription.

The catalysed reaction is RNA(n) + a ribonucleoside 5'-triphosphate = RNA(n+1) + diphosphate. In terms of biological role, DNA-dependent RNA polymerase catalyzes the transcription of DNA into RNA using the four ribonucleoside triphosphates as substrates. This chain is DNA-directed RNA polymerase subunit alpha, found in Koribacter versatilis (strain Ellin345).